A 380-amino-acid polypeptide reads, in one-letter code: Ankyrin repeat domain-containing protein 63 (380 aa).

ANK repeat units follow at residues 11-40, 46-79, 83-112, 116-145, and 153-182; these read AGTR…RSII, QGRT…AVNL, RGRT…DPEA, AGNS…RLGL, and AGLT…RAAA. Composition is skewed to low complexity over residues 181–203 and 216–226; these read AAAA…PAAS and RPLLARFARAA. The disordered stretch occupies residues 181 to 256; sequence AAAAAARGSN…GSERPELGRS (76 aa). Ser193 is modified (phosphoserine). At Ser294 the chain carries Phosphoserine. A disordered region spans residues 309–368; it reads PIGLSPHPEGGPGSGRLGLRRRSTAPDIPSLVGEAPGPESGPELEANALSVSVPGPNPWQ.

This Homo sapiens (Human) protein is Ankyrin repeat domain-containing protein 63.